Here is a 772-residue protein sequence, read N- to C-terminus: UDP-N-acetylmuramoyl-L-alanyl-D-glutamate--2,6-diaminopimelate ligase MurE homolog, chloroplastic (772 aa).

Residues 1 to 40 (MAFTFLSPHPVFLSLTGTTSSFSYKPVLLPFSRNSRTLTV) constitute a chloroplast transit peptide. Disordered stretches follow at residues 42–87 (AGPA…KLEE) and 141–168 (LLKP…DVTD). Composition is skewed to acidic residues over residues 54–63 (ADDDPPEAPE) and 158–168 (EGNEEEGDVTD). Residue S194 is modified to Phosphoserine.

The protein belongs to the MurCDEF family. MurE subfamily. In terms of assembly, component of the plastid-encoded plastid RNA polymerase (PEP) complex. As to expression, expressed in leaves and flowers.

Its subcellular location is the plastid. It localises to the chloroplast. Its function is as follows. Involved in chloroplast biogenesis. Required for thylakoid membrane development. Seems to be required for plastid-encoded plastid RNA polymerase (PEP)-dependent gene expression. This Arabidopsis thaliana (Mouse-ear cress) protein is UDP-N-acetylmuramoyl-L-alanyl-D-glutamate--2,6-diaminopimelate ligase MurE homolog, chloroplastic.